The following is a 1399-amino-acid chain: DNA-directed RNA polymerase subunit beta' (1399 aa).

Cysteine 70, cysteine 72, cysteine 85, and cysteine 88 together coordinate Zn(2+). Residues aspartate 460, aspartate 462, and aspartate 464 each coordinate Mg(2+). The Zn(2+) site is built by cysteine 814, cysteine 888, cysteine 895, and cysteine 898.

Belongs to the RNA polymerase beta' chain family. In terms of assembly, the RNAP catalytic core consists of 2 alpha, 1 beta, 1 beta' and 1 omega subunit. When a sigma factor is associated with the core the holoenzyme is formed, which can initiate transcription. It depends on Mg(2+) as a cofactor. The cofactor is Zn(2+).

It carries out the reaction RNA(n) + a ribonucleoside 5'-triphosphate = RNA(n+1) + diphosphate. DNA-dependent RNA polymerase catalyzes the transcription of DNA into RNA using the four ribonucleoside triphosphates as substrates. The protein is DNA-directed RNA polymerase subunit beta' of Pseudomonas putida (strain GB-1).